Reading from the N-terminus, the 359-residue chain is Protein RecA (359 aa).

77–84 lines the ATP pocket; the sequence is GPESSGKT.

It belongs to the RecA family.

It localises to the cytoplasm. In terms of biological role, can catalyze the hydrolysis of ATP in the presence of single-stranded DNA, the ATP-dependent uptake of single-stranded DNA by duplex DNA, and the ATP-dependent hybridization of homologous single-stranded DNAs. It interacts with LexA causing its activation and leading to its autocatalytic cleavage. The chain is Protein RecA from Azospirillum lipoferum (strain 4B).